The primary structure comprises 828 residues: Periplasmic nitrate reductase 1 (828 aa).

The segment at residues 1–30 (MKMTRRAFVKANAAASAAAVAGITLPASAA) is a signal peptide (tat-type signal). A 4Fe-4S Mo/W bis-MGD-type domain is found at 41–97 (IKWDKAPCRFCGTGCSVLVGTQNGRVVATQGDPEAPVNKGLNCIKGYFLSKIMYGKD). [4Fe-4S] cluster is bound by residues Cys48, Cys51, Cys55, and Cys83. Residues Lys85, Gln152, Asn177, Cys181, 214 to 221 (WGSNMAEM), 245 to 249 (STYYH), 264 to 266 (QTD), Met374, Gln378, Asn484, 510 to 511 (SD), Lys533, Asp560, and 718 to 727 (TGRVLEHWHT) each bind Mo-bis(molybdopterin guanine dinucleotide). Substrate is bound at residue Phe794. 2 residues coordinate Mo-bis(molybdopterin guanine dinucleotide): Asn802 and Lys819.

This sequence belongs to the prokaryotic molybdopterin-containing oxidoreductase family. NasA/NapA/NarB subfamily. Component of the periplasmic nitrate reductase NapAB complex composed of NapA and NapB. [4Fe-4S] cluster is required as a cofactor. It depends on Mo-bis(molybdopterin guanine dinucleotide) as a cofactor. In terms of processing, predicted to be exported by the Tat system. The position of the signal peptide cleavage has not been experimentally proven.

It localises to the periplasm. It carries out the reaction 2 Fe(II)-[cytochrome] + nitrate + 2 H(+) = 2 Fe(III)-[cytochrome] + nitrite + H2O. In terms of biological role, catalytic subunit of the periplasmic nitrate reductase complex NapAB. Receives electrons from NapB and catalyzes the reduction of nitrate to nitrite. This is Periplasmic nitrate reductase 1 from Photobacterium profundum (strain SS9).